The sequence spans 361 residues: POU domain, class 3, transcription factor 4 (361 aa).

Disordered stretches follow at residues 99 to 131 (PHVA…GQPL) and 144 to 192 (MLEH…PTSD). Over residues 122-131 (PSITSSGQPL) the composition is skewed to polar residues. A compositionally biased stretch (basic and acidic residues) spans 165–183 (VLREPPDHGELGSHHCQDH). A POU-specific domain is found at 186–260 (EETPTSDELE…LLNKWLEEAD (75 aa)). Phosphoserine is present on serine 265. A DNA-binding region (homeobox) is located at residues 278 to 337 (KRKKRTSIEVSVKGVLETHFLKCPKPAAQEISSLADSLQLEKEVVRVWFCNRRQKEKRMT).

This sequence belongs to the POU transcription factor family. Class-3 subfamily. Interacts with HNRNPU. As to expression, brain specific.

It is found in the nucleus. In terms of biological role, probable transcription factor which exert its primary action widely during early neural development and in a very limited set of neurons in the mature brain. This chain is POU domain, class 3, transcription factor 4 (POU3F4), found in Homo sapiens (Human).